The chain runs to 250 residues: MSEHHPEKRYEGKAKILYSTADSDVLLTYFKDDATAFNAQKKGTIQGKGEMNCTIAAALLQWLETQGIPTHFIEQTKADEMLVKAVKILPVEVVVRNIAAGSLCKQTGLAQGTVLPQPLVEFYLKDDNLGDPLLTRDRLMLLQIVTAEQLAQLQDYALRINGLMQGFFARCQITLVDFKIEFGTDKTGTILLADEISPDTCRLWDQTETDPNLRVMDKDRFRQDLGNIENAYQTVQARVLAQVQQLQSLA.

Belongs to the SAICAR synthetase family.

The catalysed reaction is 5-amino-1-(5-phospho-D-ribosyl)imidazole-4-carboxylate + L-aspartate + ATP = (2S)-2-[5-amino-1-(5-phospho-beta-D-ribosyl)imidazole-4-carboxamido]succinate + ADP + phosphate + 2 H(+). It functions in the pathway purine metabolism; IMP biosynthesis via de novo pathway; 5-amino-1-(5-phospho-D-ribosyl)imidazole-4-carboxamide from 5-amino-1-(5-phospho-D-ribosyl)imidazole-4-carboxylate: step 1/2. In Picosynechococcus sp. (strain ATCC 27264 / PCC 7002 / PR-6) (Agmenellum quadruplicatum), this protein is Phosphoribosylaminoimidazole-succinocarboxamide synthase.